Consider the following 317-residue polypeptide: Beta-ketoacyl-[acyl-carrier-protein] synthase III (317 aa).

Catalysis depends on residues Cys-112 and His-244. The interval 245-249 (QANLR) is ACP-binding. Asn-274 is an active-site residue.

The protein belongs to the thiolase-like superfamily. FabH family. As to quaternary structure, homodimer.

The protein localises to the cytoplasm. It catalyses the reaction malonyl-[ACP] + acetyl-CoA + H(+) = 3-oxobutanoyl-[ACP] + CO2 + CoA. The protein operates within lipid metabolism; fatty acid biosynthesis. Its function is as follows. Catalyzes the condensation reaction of fatty acid synthesis by the addition to an acyl acceptor of two carbons from malonyl-ACP. Catalyzes the first condensation reaction which initiates fatty acid synthesis and may therefore play a role in governing the total rate of fatty acid production. Possesses both acetoacetyl-ACP synthase and acetyl transacylase activities. Its substrate specificity determines the biosynthesis of branched-chain and/or straight-chain of fatty acids. The sequence is that of Beta-ketoacyl-[acyl-carrier-protein] synthase III from Pasteurella multocida (strain Pm70).